A 262-amino-acid polypeptide reads, in one-letter code: Indole-3-glycerol phosphate synthase (262 aa).

It belongs to the TrpC family.

The enzyme catalyses 1-(2-carboxyphenylamino)-1-deoxy-D-ribulose 5-phosphate + H(+) = (1S,2R)-1-C-(indol-3-yl)glycerol 3-phosphate + CO2 + H2O. It functions in the pathway amino-acid biosynthesis; L-tryptophan biosynthesis; L-tryptophan from chorismate: step 4/5. This is Indole-3-glycerol phosphate synthase from Dechloromonas aromatica (strain RCB).